A 318-amino-acid polypeptide reads, in one-letter code: L-malyl-CoA/beta-methylmalyl-CoA lyase (318 aa).

Positions 19, 24, 30, and 76 each coordinate substrate. Residues E141 and D168 each contribute to the Mg(2+) site. Substrate is bound by residues 167–168 (AD) and 251–252 (IH).

This sequence belongs to the HpcH/HpaI aldolase family. In terms of assembly, homohexamer. Dimer of trimers. Requires Mg(2+) as cofactor. It depends on Mn(2+) as a cofactor.

It catalyses the reaction (S)-malyl-CoA = glyoxylate + acetyl-CoA. The catalysed reaction is (2R,3S)-beta-methylmalyl-CoA = propanoyl-CoA + glyoxylate. Its activity is regulated as follows. In vitro inhibited by EDTA. Functionally, involved in the ethylmalonyl-CoA pathway for acetate assimilation. Catalyzes the reversible condensation of glyoxylate and acetyl-CoA to L-malyl-CoA and the reversible condensation of glyoxylate and propionyl-CoA to beta-methylmalyl-CoA. This chain is L-malyl-CoA/beta-methylmalyl-CoA lyase, found in Rhodobacter capsulatus (Rhodopseudomonas capsulata).